The primary structure comprises 387 residues: Protein arginine N-methyltransferase 1 (387 aa).

Residues 1-60 (MDQRKGSGSDANGGLAEATASRLRFEDPDEVMEENPAAAAATVGAEEEGGEGGGGEEVIG) are disordered. Positions 34–44 (ENPAAAAATVG) are enriched in low complexity. Residues 66–387 (ADYYFDSYSH…VSRTQHYKMR (322 aa)) enclose the SAM-dependent MTase PRMT-type domain. The S-adenosyl-L-methionine site is built by H79, R88, G112, E134, and E163. Catalysis depends on residues E178 and E187.

The protein belongs to the class I-like SAM-binding methyltransferase superfamily. Protein arginine N-methyltransferase family.

The protein localises to the nucleus. It carries out the reaction L-arginyl-[protein] + S-adenosyl-L-methionine = N(omega)-methyl-L-arginyl-[protein] + S-adenosyl-L-homocysteine + H(+). It catalyses the reaction L-arginyl-[protein] + 2 S-adenosyl-L-methionine = N(omega),N(omega)-dimethyl-L-arginyl-[protein] + 2 S-adenosyl-L-homocysteine + 2 H(+). Arginine methyltransferase that methylates (mono and asymmetric dimethylation) the guanidino nitrogens of arginyl residues present in target proteins. The polypeptide is Protein arginine N-methyltransferase 1 (PRMT1) (Oryza sativa subsp. indica (Rice)).